We begin with the raw amino-acid sequence, 348 residues long: Short-wave-sensitive opsin 1 (348 aa).

The Extracellular portion of the chain corresponds to 1–33 (MRKMSEEEFYLFKNISSVGPWDGPQYHIAPVWA). N-linked (GlcNAc...) asparagine glycosylation occurs at Asn14. Residues 34 to 58 (FYLQAAFMGTVFLIGFPLNAMVLVA) traverse the membrane as a helical segment. Over 59–70 (TLRYKKLRQPLN) the chain is Cytoplasmic. The chain crosses the membrane as a helical span at residues 71-96 (YILVNVSFGGFLLCIFSVFPVFVASC). At 97–110 (NGYFVFGRHVCALE) the chain is on the extracellular side. A disulfide bond links Cys107 and Cys184. Residues 111–130 (GFLGTVAGLVTGWSLAFLAF) traverse the membrane as a helical segment. Topologically, residues 131-149 (ERYIVICKPFGNFRFSSKH) are cytoplasmic. Residues 150–173 (ALTVVLATWTIGIGVSIPPFFGWS) traverse the membrane as a helical segment. Residues 174-199 (RFIPEGLQCSCGPDWYTVGTKYRSES) lie on the Extracellular side of the membrane. Residues 200–227 (YTWFLFIFCFIVPLSLICFSYTQLLRAL) form a helical membrane-spanning segment. At 228–249 (KAVAAQQQESATTQKAEREVSR) the chain is on the cytoplasmic side. The chain crosses the membrane as a helical span at residues 250 to 273 (MVVVMVGSFCVCYVPYAAFAMYMV). The Extracellular segment spans residues 274–281 (NNRNHGLD). The helical transmembrane segment at 282-306 (LRLVTIPSFFSKSACIYNPIIYCFM) threads the bilayer. N6-(retinylidene)lysine is present on Lys293. Over 307 to 348 (NKQFQACIMKMVCGKAMTDESDTCSSQKTEVSTVSSTQVGPN) the chain is Cytoplasmic.

It belongs to the G-protein coupled receptor 1 family. Opsin subfamily. Phosphorylated on some or all of the serine and threonine residues present in the C-terminal region.

It localises to the cell membrane. The protein localises to the photoreceptor inner segment. The protein resides in the cell projection. It is found in the cilium. Its subcellular location is the photoreceptor outer segment. It localises to the cytoplasm. The protein localises to the perinuclear region. Visual pigments are the light-absorbing molecules that mediate vision. They consist of an apoprotein, opsin, covalently linked to cis-retinal. Required for the maintenance of cone outer segment organization in the ventral retina, but not essential for the maintenance of functioning cone photoreceptors. Involved in ensuring correct abundance and localization of retinal membrane proteins. May increase spectral sensitivity in dim light. The protein is Short-wave-sensitive opsin 1 (OPN1SW) of Pan paniscus (Pygmy chimpanzee).